The primary structure comprises 289 residues: Somatostatin-like receptor F_48D10.1 (289 aa).

Topologically, residues 1–57 (MEPLDQTPGFPLSPEPNYWYETTPSLLLVSYPHLLDISSNQSTQSVPFQGSSALLTA) are extracellular. N-linked (GlcNAc...) asparagine glycosylation occurs at N40. Residues 58–79 (VIYITVFVVGLTGNTLAIYVVL) traverse the membrane as a helical segment. Over 80 to 89 (RYAGMKTVTN) the chain is Cytoplasmic. The chain crosses the membrane as a helical span at residues 90–110 (IYILNLAVADELYIVGLPFLA). The Extracellular portion of the chain corresponds to 111-126 (TQNVLSYWPFGSFLCR). C125 and C221 are disulfide-bonded. The chain crosses the membrane as a helical span at residues 127–148 (VVMTADSMNQFTSIFCLTVMSI). The Cytoplasmic portion of the chain corresponds to 149–170 (DRYLAVVHPIRSTKWRHPRVAK). The chain crosses the membrane as a helical span at residues 171–191 (VVSAAVWAVSFVVVLPVVIFS). Residues 192–240 (DVQVRPSRPLQVGTSSKCLVKRVQETFNSCNMIWPEPKNVWSTAFILYT) lie on the Extracellular side of the membrane. The chain crosses the membrane as a helical span at residues 241 to 261 (AMVGFFGPLLIICLCYLLIVI). At 262–289 (KVRHRMSAAQVGAVVSTCPLNICCLSRR) the chain is on the cytoplasmic side.

The protein belongs to the G-protein coupled receptor 1 family.

The protein resides in the cell membrane. The protein is Somatostatin-like receptor F_48D10.1 of Takifugu rubripes (Japanese pufferfish).